Reading from the N-terminus, the 120-residue chain is MSETPDDLDELRQQRMEELRDQADGQQSQTSDNTAAAQEAAREKAEAQQEALLKQHLTDGARQRLNAIEMSKPDFAEKVKKQLVTLAQSGRIQDRIDEDQMRELLQELKPDSKSYNIRRR.

Residues 1–55 (MSETPDDLDELRQQRMEELRDQADGQQSQTSDNTAAAQEAAREKAEAQQEALLKQ) are disordered. Residues 10–23 (ELRQQRMEELRDQA) are compositionally biased toward basic and acidic residues. Residues 24–34 (DGQQSQTSDNT) show a composition bias toward polar residues.

The protein belongs to the PDCD5 family.

The protein is DNA-binding protein HQ_1105A of Haloquadratum walsbyi (strain DSM 16790 / HBSQ001).